Reading from the N-terminus, the 271-residue chain is Plasmanylethanolamine desaturase 1 (271 aa).

The segment at 1-25 (MAGAEDAPGRQPELDEDETAEGRRW) is disordered. 3 consecutive transmembrane segments (helical) span residues 48–68 (WCSV…LLLL), 75–95 (PLVI…SGLV), and 166–186 (LYPW…TNQI). The short motif at 187–191 (HKWSH) is the Histidine box-1 element. Positions 214 to 218 (HHRIH) match the Histidine box-2 motif.

It belongs to the fatty acid desaturase CarF family.

Its subcellular location is the endoplasmic reticulum membrane. It carries out the reaction a 1-(1,2-saturated alkyl)-2-acyl-sn-glycero-3-phosphoethanolamine + 2 Fe(II)-[cytochrome b5] + O2 + 2 H(+) = a 1-O-(1Z-alkenyl)-2-acyl-sn-glycero-3-phosphoethanolamine + 2 Fe(III)-[cytochrome b5] + 2 H2O. The catalysed reaction is a 1-O-hexadecyl-2-acyl-sn-glycero-3-phosphoethanolamine + 2 Fe(II)-[cytochrome b5] + O2 + 2 H(+) = a 1-O-(1Z-hexadecenyl)-2-acyl-sn-glycero-3-phosphoethanolamine + 2 Fe(III)-[cytochrome b5] + 2 H2O. The enzyme catalyses a 1-O-octadecyl-2-acyl-sn-glycero-3-phosphoethanolamine + 2 Fe(II)-[cytochrome b5] + O2 + 2 H(+) = a 1-O-(1Z-octadecenyl)-2-acyl-sn-glycero-3-phosphoethanolamine + 2 Fe(III)-[cytochrome b5] + 2 H2O. It catalyses the reaction a 1-O-(9Z-octadecenyl)-2-acyl-sn-glycero-3-phosphoethanolamine + 2 Fe(II)-[cytochrome b5] + O2 + 2 H(+) = a 1-O-(1Z,9Z-octadecadienyl)-2-acyl-sn-glycero-3-phosphoethanolamine + 2 Fe(III)-[cytochrome b5] + 2 H2O. Its pathway is lipid metabolism; fatty acid metabolism. Its function is as follows. Plasmanylethanolamine desaturase involved in plasmalogen biogenesis in the endoplasmic reticulum membrane. Plasmalogens are glycerophospholipids with a hydrocarbon chain linked by a vinyl ether bond at the glycerol sn-1 position, and are involved in antioxidative and signaling mechanisms. This chain is Plasmanylethanolamine desaturase 1, found in Mus musculus (Mouse).